A 189-amino-acid polypeptide reads, in one-letter code: Ras-like protein 1 (189 aa).

GTP is bound at residue 10–17 (GAGGVGKS). Residues 32-40 (YDPTIEDSY) carry the Effector region motif. GTP-binding positions include 57 to 61 (DTAGQ) and 116 to 119 (NKCD). Residue Cys186 is modified to Cysteine methyl ester. Cys186 is lipidated: S-geranylgeranyl cysteine. Positions 187 to 189 (KML) are cleaved as a propeptide — removed in mature form.

Belongs to the small GTPase superfamily. Ras family.

The protein resides in the cell membrane. It catalyses the reaction GTP + H2O = GDP + phosphate + H(+). Its activity is regulated as follows. Alternates between an inactive form bound to GDP and an active form bound to GTP. Activated by a guanine nucleotide-exchange factor (GEF) and inactivated by a GTPase-activating protein (GAP). Functionally, ras proteins bind GDP/GTP and possess intrinsic GTPase activity. Plays a role in eye development by regulating cell growth, survival of postmitotic ommatidial cells and differentiation of photoreceptor cells. During larval development, mediates Ptth/tor signaling leading to the production of ecdysone, a hormone required for the initiation of metamorphosis. The protein is Ras-like protein 1 of Drosophila virilis (Fruit fly).